We begin with the raw amino-acid sequence, 114 residues long: Replication initiation control protein YabA (114 aa).

Zn(2+)-binding residues include His79, Cys81, Cys95, and Cys98.

The protein belongs to the YabA family. Homotetramer. Interacts with both DnaA and DnaN, acting as a bridge between these two proteins. It depends on Zn(2+) as a cofactor.

It localises to the cytoplasm. It is found in the nucleoid. Involved in control of chromosome replication initiation. Inhibits the cooperative binding of DnaA to the oriC region, thus negatively regulating initiation of chromosome replication. Inhibits the ability of DnaA-ATP to form a helix on DNA; does not disassemble preformed DnaA-DNA helices. Decreases the residence time of DnaA on the chromosome at its binding sites (oriC, replication forks and promoter-binding sites). Tethers DnaA to the replication machinery via the DNA polymerase beta sliding clamp subunit (dnaN). Associates with oriC and other DnaA targets on the chromosome in a DnaA-dependent manner. This is Replication initiation control protein YabA from Lactobacillus gasseri (strain ATCC 33323 / DSM 20243 / BCRC 14619 / CIP 102991 / JCM 1131 / KCTC 3163 / NCIMB 11718 / NCTC 13722 / AM63).